We begin with the raw amino-acid sequence, 210 residues long: Ribosomal RNA large subunit methyltransferase E (210 aa).

The S-adenosyl-L-methionine site is built by G67, W69, D87, D103, and D128. The active-site Proton acceptor is K168.

It belongs to the class I-like SAM-binding methyltransferase superfamily. RNA methyltransferase RlmE family.

Its subcellular location is the cytoplasm. The catalysed reaction is uridine(2552) in 23S rRNA + S-adenosyl-L-methionine = 2'-O-methyluridine(2552) in 23S rRNA + S-adenosyl-L-homocysteine + H(+). Functionally, specifically methylates the uridine in position 2552 of 23S rRNA at the 2'-O position of the ribose in the fully assembled 50S ribosomal subunit. The protein is Ribosomal RNA large subunit methyltransferase E of Psychrobacter sp. (strain PRwf-1).